The chain runs to 655 residues: p-hydroxybenzoic acid efflux pump subunit AaeB (655 aa).

A run of 11 helical transmembrane segments spans residues 13–33 (FAVK…HFQL), 38–58 (WAVL…GGEP), 69–89 (LRII…ISMI), 93–113 (LLMI…SSLV), 121–141 (WGLS…EPLL), 152–172 (EIVI…PRSI), 370–390 (LFWL…IAVV), 407–427 (FIYG…VIIP), 431–451 (QSML…GIEV), 459–479 (MGAL…TFHF), and 482–502 (FLDS…VILL).

This sequence belongs to the aromatic acid exporter ArAE (TC 2.A.85) family.

Its subcellular location is the cell inner membrane. Forms an efflux pump with AaeA. Could function as a metabolic relief valve, allowing to eliminate certain compounds when they accumulate to high levels in the cell. The polypeptide is p-hydroxybenzoic acid efflux pump subunit AaeB (Salmonella dublin (strain CT_02021853)).